A 244-amino-acid chain; its full sequence is rRNA adenine N-6-methyltransferase (244 aa).

S-adenosyl-L-methionine is bound by residues Asn11, Ile13, Gly38, Glu59, Asp84, and Asn101.

Belongs to the class I-like SAM-binding methyltransferase superfamily. rRNA adenine N(6)-methyltransferase family.

The enzyme catalyses adenosine(2085) in 23S rRNA + 2 S-adenosyl-L-methionine = N(6)-dimethyladenosine(2085) in 23S rRNA + 2 S-adenosyl-L-homocysteine + 2 H(+). Functionally, this protein produces a dimethylation of the adenine residue at position 2085 in 23S rRNA, resulting in reduced affinity between ribosomes and macrolide-lincosamide-streptogramin B antibiotics. Is involved in erythromycin resistance. This Limosilactobacillus reuteri (Lactobacillus reuteri) protein is rRNA adenine N-6-methyltransferase (ermGT).